A 316-amino-acid polypeptide reads, in one-letter code: Beta-ketoacyl-[acyl-carrier-protein] synthase III 1 (316 aa).

Catalysis depends on residues Cys112 and His243. The segment at 244 to 248 (QANYR) is ACP-binding. Residue Asn273 is part of the active site.

It belongs to the thiolase-like superfamily. FabH family. In terms of assembly, homodimer.

It is found in the cytoplasm. The enzyme catalyses malonyl-[ACP] + acetyl-CoA + H(+) = 3-oxobutanoyl-[ACP] + CO2 + CoA. It functions in the pathway lipid metabolism; fatty acid biosynthesis. In terms of biological role, catalyzes the condensation reaction of fatty acid synthesis by the addition to an acyl acceptor of two carbons from malonyl-ACP. Catalyzes the first condensation reaction which initiates fatty acid synthesis and may therefore play a role in governing the total rate of fatty acid production. Possesses both acetoacetyl-ACP synthase and acetyl transacylase activities. Its substrate specificity determines the biosynthesis of branched-chain and/or straight-chain of fatty acids. This is Beta-ketoacyl-[acyl-carrier-protein] synthase III 1 from Vibrio parahaemolyticus serotype O3:K6 (strain RIMD 2210633).